We begin with the raw amino-acid sequence, 357 residues long: DNA integrity scanning protein DisA (357 aa).

The DAC domain occupies 8-146 (VKSMINILQL…GNLRYTLKDI (139 aa)). Residues G75, L93, and 106–110 (MRHRT) contribute to the ATP site.

It belongs to the DisA family. As to quaternary structure, homooctamer. Mg(2+) is required as a cofactor.

It carries out the reaction 2 ATP = 3',3'-c-di-AMP + 2 diphosphate. Its function is as follows. Participates in a DNA-damage check-point that is active prior to asymmetric division when DNA is damaged. DisA forms globular foci that rapidly scan along the chromosomes during sporulation, searching for lesions. When a lesion is present, DisA pauses at the lesion site. This triggers a cellular response that culminates in a temporary block in sporulation initiation. In terms of biological role, also has diadenylate cyclase activity, catalyzing the condensation of 2 ATP molecules into cyclic di-AMP (c-di-AMP). c-di-AMP acts as a signaling molecule that couples DNA integrity with progression of sporulation. The rise in c-di-AMP level generated by DisA while scanning the chromosome, operates as a positive signal that advances sporulation; upon encountering a lesion, the DisA focus arrests at the damaged site and halts c-di-AMP synthesis. This is DNA integrity scanning protein DisA from Bacillus cereus (strain ATCC 14579 / DSM 31 / CCUG 7414 / JCM 2152 / NBRC 15305 / NCIMB 9373 / NCTC 2599 / NRRL B-3711).